The sequence spans 184 residues: Fe/S biogenesis protein NfuA (184 aa).

The [4Fe-4S] cluster site is built by Cys142 and Cys145.

The protein belongs to the NfuA family. Homodimer. Requires [4Fe-4S] cluster as cofactor.

Functionally, involved in iron-sulfur cluster biogenesis. Binds a 4Fe-4S cluster, can transfer this cluster to apoproteins, and thereby intervenes in the maturation of Fe/S proteins. Could also act as a scaffold/chaperone for damaged Fe/S proteins. The protein is Fe/S biogenesis protein NfuA of Wigglesworthia glossinidia brevipalpis.